The sequence spans 240 residues: Uridylate kinase (240 aa).

12-15 (KLSG) contacts ATP. An involved in allosteric activation by GTP region spans residues 20–25 (GDQGYG). A UMP-binding site is contributed by glycine 54. Residues glycine 55 and arginine 59 each coordinate ATP. Residues aspartate 74 and 135-142 (TGNPYFST) contribute to the UMP site. Positions 163, 169, and 172 each coordinate ATP.

This sequence belongs to the UMP kinase family. As to quaternary structure, homohexamer.

The protein localises to the cytoplasm. The catalysed reaction is UMP + ATP = UDP + ADP. Its pathway is pyrimidine metabolism; CTP biosynthesis via de novo pathway; UDP from UMP (UMPK route): step 1/1. Its activity is regulated as follows. Allosterically activated by GTP. Inhibited by UTP. In terms of biological role, catalyzes the reversible phosphorylation of UMP to UDP. The chain is Uridylate kinase from Oceanobacillus iheyensis (strain DSM 14371 / CIP 107618 / JCM 11309 / KCTC 3954 / HTE831).